The chain runs to 2244 residues: Multifunctional protein ura1 (2244 aa).

Residues 1 to 437 (MSGLLPSLSS…GPRDTEFLFD (437 aa)) form a GATase (Glutamine amidotransferase) region. Positions 16–44 (QSEALGMPRTHGPKPSENDPKEPTCSPSP) are disordered. The L-glutamine site is built by S101, G309, and G311. The 186-residue stretch at 264 to 449 (RILVIDVGMK…IDVVKRSADA (186 aa)) folds into the Glutamine amidotransferase type-1 domain. C338 acts as the Nucleophile; for GATase activity in catalysis. Residues Q342, N380, G382, and Y383 each contribute to the L-glutamine site. Active-site for GATase activity residues include H422 and E424. The segment at 438 to 477 (VFIDVVKRSADAKSLQPFKLPGGTIEENRSRHPLVDAKRV) is linker. A CPSase A region spans residues 478–1014 (LILGSGGLSI…VEHDIHFNDK (537 aa)). The interval 478 to 1514 (LILGSGGLSI…TNVKCAKLMI (1037 aa)) is CPSase (Carbamoyl phosphate synthase). ATP is bound by residues R594, R634, G640, G641, R671, M673, E678, G704, I705, H706, Q747, and E761. Positions 598 to 790 (ARAMDEINEK…LAFTAAKLGL (193 aa)) constitute an ATP-grasp 1 domain. Mg(2+) is bound by residues Q747, E761, and N763. Mn(2+)-binding residues include Q747, E761, and N763. The segment at 1015–1514 (GVMVLGSGVY…TNVKCAKLMI (500 aa)) is CPSase B. S1119 carries the phosphoserine modification. The ATP-grasp 2 domain occupies 1133–1324 (SRMLDDIGVD…MISMATDVIM (192 aa)). R1169, K1208, I1210, E1215, G1240, V1241, H1242, S1243, Q1283, and E1295 together coordinate ATP. Positions 1283, 1295, and 1297 each coordinate Mg(2+). The Mn(2+) site is built by Q1283, E1295, and N1297. Residues 1390 to 1552 (FRLPKKNILI…INISAFLPEF (163 aa)) form the MGS-like domain. The tract at residues 1515-1524 (EAICRNLDFS) is linker. The segment at 1525–1853 (LSTVDFQSSF…FDGHDVFFDG (329 aa)) is defective DHOase domain. A linker region spans residues 1854 to 1935 (ELNFEHTYGR…VQLINSSPFY (82 aa)). S1881 and S1885 each carry phosphoserine. The segment at 1936 to 2244 (RKHIISVHQV…CVMGATEVAN (309 aa)) is ATCase (Aspartate transcarbamylase). Carbamoyl phosphate contacts are provided by R1988 and T1989. K2016 contacts L-aspartate. 3 residues coordinate carbamoyl phosphate: R2037, H2065, and Q2068. Residues R2098 and R2160 each coordinate L-aspartate. Carbamoyl phosphate-binding residues include L2199 and P2200.

It in the N-terminal section; belongs to the CarA family. This sequence in the 2nd section; belongs to the CarB family. In the 3rd section; belongs to the metallo-dependent hydrolases superfamily. DHOase family. CAD subfamily. The protein in the C-terminal section; belongs to the aspartate/ornithine carbamoyltransferase superfamily. ATCase family. It depends on Mg(2+) as a cofactor. Mn(2+) serves as cofactor.

It carries out the reaction hydrogencarbonate + L-glutamine + 2 ATP + H2O = carbamoyl phosphate + L-glutamate + 2 ADP + phosphate + 2 H(+). The catalysed reaction is L-glutamine + H2O = L-glutamate + NH4(+). The enzyme catalyses hydrogencarbonate + NH4(+) + 2 ATP = carbamoyl phosphate + 2 ADP + phosphate + 2 H(+). It catalyses the reaction carbamoyl phosphate + L-aspartate = N-carbamoyl-L-aspartate + phosphate + H(+). It functions in the pathway pyrimidine metabolism; UMP biosynthesis via de novo pathway; (S)-dihydroorotate from bicarbonate: step 1/3. The protein operates within pyrimidine metabolism; UMP biosynthesis via de novo pathway; (S)-dihydroorotate from bicarbonate: step 2/3. Both CPSase and ATCase activities are feedback inhibited by the end product UTP. Its function is as follows. Multifunctional protein that encodes the first 2 enzymatic activities of the de novo pyrimidine pathway: carbamoylphosphate synthetase (CPSase; EC 6.3.5.5) and aspartate transcarbamylase (ATCase; EC 2.1.3.2). The CPSase-function is accomplished in 2 steps, by a glutamine-dependent amidotransferase activity (GATase) that binds and cleaves glutamine to produce ammonia, followed by an ammonium-dependent carbamoyl phosphate synthetase, which reacts with the ammonia, hydrogencarbonate and ATP to form carbamoyl phosphate. The endogenously produced carbamoyl phosphate is sequestered and channeled to the ATCase active site. ATCase then catalyzes the formation of carbamoyl-L-aspartate from L-aspartate and carbamoyl phosphate. The sequence is that of Multifunctional protein ura1 (ura1) from Schizosaccharomyces pombe (strain 972 / ATCC 24843) (Fission yeast).